The chain runs to 421 residues: Imidazolonepropionase (421 aa).

Histidine 81 and histidine 83 together coordinate Fe(3+). The Zn(2+) site is built by histidine 81 and histidine 83. Positions 90, 153, and 186 each coordinate 4-imidazolone-5-propanoate. Tyrosine 153 contacts N-formimidoyl-L-glutamate. Position 251 (histidine 251) interacts with Fe(3+). Residue histidine 251 participates in Zn(2+) binding. A 4-imidazolone-5-propanoate-binding site is contributed by glutamate 254. Residue aspartate 326 participates in Fe(3+) binding. Residue aspartate 326 participates in Zn(2+) binding. 2 residues coordinate N-formimidoyl-L-glutamate: asparagine 328 and glycine 330. Position 331 (serine 331) interacts with 4-imidazolone-5-propanoate.

This sequence belongs to the metallo-dependent hydrolases superfamily. HutI family. Zn(2+) serves as cofactor. It depends on Fe(3+) as a cofactor.

The protein localises to the cytoplasm. It catalyses the reaction 4-imidazolone-5-propanoate + H2O = N-formimidoyl-L-glutamate. It functions in the pathway amino-acid degradation; L-histidine degradation into L-glutamate; N-formimidoyl-L-glutamate from L-histidine: step 3/3. Catalyzes the hydrolytic cleavage of the carbon-nitrogen bond in imidazolone-5-propanoate to yield N-formimidoyl-L-glutamate. It is the third step in the universal histidine degradation pathway. This Streptococcus pyogenes serotype M2 (strain MGAS10270) protein is Imidazolonepropionase.